Consider the following 309-residue polypeptide: Pyridoxal kinase (309 aa).

Thr2 carries the N-acetylthreonine; in Pyridoxal kinase, N-terminally processed modification. Residues Ser23 and Thr58 each contribute to the pyridoxal site. Thr58 is a pyridoxal 5'-phosphate binding site. Position 124 (Asp124) interacts with ATP. Asp124 is a Na(+) binding site. Mg(2+) is bound at residue Asp129. Thr155 is a binding site for Na(+). ATP-binding positions include 157–160, 193–194, 225–227, and Thr232; these read NQFE, TS, and IPA. A Na(+)-binding site is contributed by Thr193. Pyridoxal 5'-phosphate is bound at residue 233–234; it reads GD. Asp234 serves as the catalytic Proton acceptor.

It belongs to the pyridoxine kinase family. Homodimer. The cofactor is Zn(2+). Expressed ubiquitously in leaves, stems, roots, flowers and siliques. Present in root hairs and other tip-growing cells such as papillar cells on the top of stigma.

It carries out the reaction pyridoxal + ATP = pyridoxal 5'-phosphate + ADP + H(+). It participates in cofactor metabolism; pyridoxal 5'-phosphate salvage; pyridoxal 5'-phosphate from pyridoxal: step 1/1. In terms of biological role, catalyzes the transfer of a phosphate group from ATP to the 5-hydroxylmethyl group of pyridoxal to form the biologically active pyridoxal phosphate, an active form of vitamin B6. Required for Na(+) and K(+) homeostasis and for salt tolerance. Involved in root hair development, both for initiation and tip growth. This Arabidopsis thaliana (Mouse-ear cress) protein is Pyridoxal kinase.